Here is a 519-residue protein sequence, read N- to C-terminus: Cell division cycle protein 20 homolog B (519 aa).

A disordered region spans residues 77 to 106 (WQLSPARDPESSSSVEEGPPSHTPESLASG). Positions 87–96 (SSSSVEEGPP) are enriched in low complexity. WD repeat units follow at residues 229–266 (RNDYYLNTLDWSSQNLVAVALGTSVYIWNGQNHSWIEN), 271–310 (VCCHYVSSVTWMREGSCLAVGTSEGEVQLWDAITKKQLRN), 353–392 (YHKEAVCSLKWSPDGRLLSSGCNDGLLTIWPHDPGAGVQG), 399–441 (PQST…NIQT), 443–484 (STQS…RSGG), and 487–519 (GHRDRVLHLSLSPDQTRLFSAAADGTACVWKCC).

It belongs to the WD repeat CDC20/Fizzy family. As to expression, expressed in multiciliated cells (MCCs).

The protein localises to the cytoplasm. Functionally, protein regulator of centriole-deuterosome disengagement and subsequently participates in the ciliogenesis in multiciliated cells (MCCs). This Mus musculus (Mouse) protein is Cell division cycle protein 20 homolog B.